The sequence spans 275 residues: MSYNSRNQRDSATINHKNQAVFNVEGVKVYYGGFLALIDVHLQIPDKEIIAFIGPSGCGKSTLLRCFNRMNDLIPGAKVEGRLHYRDRNIYDSRINSVKLRRQVGMVFQRPNPFPKSIYENIAFSPRANGYKGNLDELVEDSLRRAAIWNEVKDKLKAKGTALSGGQQQRLCIARAIAMKPDVLLMDEPCSALDPISTRQVEELCLELKEQYTIIMVTHNMQQASRVADWTAFFNTEIDEYGKRRGKLVEFSPTEQMFNSPNTKEAQEYISGRFG.

In terms of domain architecture, ABC transporter spans 22-261 (FNVEGVKVYY…SPTEQMFNSP (240 aa)). Position 54–61 (54–61 (GPSGCGKS)) interacts with ATP.

This sequence belongs to the ABC transporter superfamily. Phosphate importer (TC 3.A.1.7) family. As to quaternary structure, the complex is composed of two ATP-binding proteins (PstB), two transmembrane proteins (PstC and PstA) and a solute-binding protein (PstS).

It is found in the cell inner membrane. It carries out the reaction phosphate(out) + ATP + H2O = ADP + 2 phosphate(in) + H(+). Its function is as follows. Part of the ABC transporter complex PstSACB involved in phosphate import. Responsible for energy coupling to the transport system. The sequence is that of Phosphate import ATP-binding protein PstB 1 from Trichormus variabilis (strain ATCC 29413 / PCC 7937) (Anabaena variabilis).